A 261-amino-acid polypeptide reads, in one-letter code: Proline-rich protein HaeIII subfamily 1 (261 aa).

Residues 1–15 (MLVVLFTVALLALSS) form the signal peptide. The disordered stretch occupies residues 15–261 (SAQGPREENQ…PPQGRPQGPR (247 aa)). Composition is skewed to pro residues over residues 32–44 (QRPP…PRPP) and 51–237 (GPPP…PPTG). The span at 238-261 (GPQQTPPLAGNTQGPPQGRPQGPR) shows a compositional bias: low complexity.

The protein resides in the secreted. This Mus musculus (Mouse) protein is Proline-rich protein HaeIII subfamily 1 (Prh1).